Consider the following 442-residue polypeptide: 26S proteasome non-ATPase regulatory subunit 12 homolog B (442 aa).

Positions 1–129 (MEESRQLESS…KEEQGLIAEA (129 aa)) form a coiled coil. Residues 232-403 (EICRSYKAIY…GIICFQIVKD (172 aa)) enclose the PCI domain.

This sequence belongs to the proteasome subunit p55 family. As to quaternary structure, component of the 19S regulatory particle (RP/PA700) lid subcomplex of the 26S proteasome. The 26S proteasome is composed of a core protease (CP), known as the 20S proteasome, capped at one or both ends by the 19S regulatory particle (RP/PA700). The RP/PA700 complex is composed of at least 17 different subunits in two subcomplexes, the base and the lid, which form the portions proximal and distal to the 20S proteolytic core, respectively. As to expression, ubiquitous with highest expression in flowers.

Its subcellular location is the cytoplasm. It localises to the nucleus. In terms of biological role, acts as a regulatory subunit of the 26 proteasome which is involved in the ATP-dependent degradation of ubiquitinated proteins. Acts redundantly with RPN5A. The sequence is that of 26S proteasome non-ATPase regulatory subunit 12 homolog B (RPN5B) from Arabidopsis thaliana (Mouse-ear cress).